The sequence spans 138 residues: uncharacterized protein (138 aa).

This is an uncharacterized protein from Caenorhabditis elegans.